Here is a 745-residue protein sequence, read N- to C-terminus: Cytoplasmic polyadenylation element-binding protein 3 (745 aa).

Disordered stretches follow at residues 1 to 45 (MNLN…KSPT), 94 to 180 (VGSK…TNNS), and 204 to 283 (NKAN…FGEL). The segment covering 162 to 175 (LNFERDAEQKKDST) has biased composition (basic and acidic residues). Positions 219 to 229 (ETPTDSPQKGF) are enriched in polar residues. Residues 230-240 (SSSTESSPSDS) show a composition bias toward low complexity. Polar residues predominate over residues 241–255 (MNQFPSREHFTSANE). Positions 264-276 (FQQEHGNKNRDSD) are enriched in basic and acidic residues. The 23-residue stretch at 297–319 (IFVGGVPWDITEAALKDSFGEFG) folds into the RRM domain.

Functionally, cytoplasmic polyadenylation element binding protein that binds to and regulates the translation of specific mRNAs. May not be required for oogenesis. The protein is Cytoplasmic polyadenylation element-binding protein 3 (cpb-3) of Caenorhabditis elegans.